Consider the following 281-residue polypeptide: Shikimate dehydrogenase (NADP(+)) (281 aa).

Residues 20 to 22 (SRS) and threonine 67 each bind shikimate. The active-site Proton acceptor is the lysine 71. Aspartate 83 is a binding site for NADP(+). Asparagine 92 and aspartate 108 together coordinate shikimate. NADP(+) is bound by residues 133–137 (GAGGA), 157–162 (NRTEAR), and methionine 225. Tyrosine 227 serves as a coordination point for shikimate. Glycine 248 is an NADP(+) binding site.

It belongs to the shikimate dehydrogenase family. In terms of assembly, homodimer.

It catalyses the reaction shikimate + NADP(+) = 3-dehydroshikimate + NADPH + H(+). It participates in metabolic intermediate biosynthesis; chorismate biosynthesis; chorismate from D-erythrose 4-phosphate and phosphoenolpyruvate: step 4/7. Functionally, involved in the biosynthesis of the chorismate, which leads to the biosynthesis of aromatic amino acids. Catalyzes the reversible NADPH linked reduction of 3-dehydroshikimate (DHSA) to yield shikimate (SA). The polypeptide is Shikimate dehydrogenase (NADP(+)) (Paracidovorax citrulli (strain AAC00-1) (Acidovorax citrulli)).